A 472-amino-acid chain; its full sequence is 3-isopropylmalate dehydratase large subunit (472 aa).

Residues Cys346, Cys406, and Cys409 each contribute to the [4Fe-4S] cluster site.

The protein belongs to the aconitase/IPM isomerase family. LeuC type 1 subfamily. Heterodimer of LeuC and LeuD. [4Fe-4S] cluster serves as cofactor.

The enzyme catalyses (2R,3S)-3-isopropylmalate = (2S)-2-isopropylmalate. It functions in the pathway amino-acid biosynthesis; L-leucine biosynthesis; L-leucine from 3-methyl-2-oxobutanoate: step 2/4. Its function is as follows. Catalyzes the isomerization between 2-isopropylmalate and 3-isopropylmalate, via the formation of 2-isopropylmaleate. The protein is 3-isopropylmalate dehydratase large subunit of Thermus thermophilus (strain ATCC BAA-163 / DSM 7039 / HB27).